The following is a 77-amino-acid chain: U8-lycotoxin-Ls1m (77 aa).

The signal sequence occupies residues 1 to 20; sequence MKLMIFTGLVLFAIVRLIEA. A propeptide spanning residues 21 to 26 is cleaved from the precursor; sequence QAENEK.

It belongs to the neurotoxin 19 (CSTX) family. 08 (U8-Lctx) subfamily. In terms of processing, contains 4 disulfide bonds. Expressed by the venom gland.

It localises to the secreted. The protein is U8-lycotoxin-Ls1m of Lycosa singoriensis (Wolf spider).